Consider the following 642-residue polypeptide: 1-deoxy-D-xylulose-5-phosphate synthase 2 (642 aa).

Residues histidine 79 and 120-122 contribute to the thiamine diphosphate site; that span reads AHS. Aspartate 155 is a binding site for Mg(2+). Thiamine diphosphate-binding positions include 156–157, asparagine 184, tyrosine 293, and glutamate 375; that span reads GS. Asparagine 184 contributes to the Mg(2+) binding site.

This sequence belongs to the transketolase family. DXPS subfamily. In terms of assembly, homodimer. It depends on Mg(2+) as a cofactor. Thiamine diphosphate serves as cofactor.

It carries out the reaction D-glyceraldehyde 3-phosphate + pyruvate + H(+) = 1-deoxy-D-xylulose 5-phosphate + CO2. Its pathway is metabolic intermediate biosynthesis; 1-deoxy-D-xylulose 5-phosphate biosynthesis; 1-deoxy-D-xylulose 5-phosphate from D-glyceraldehyde 3-phosphate and pyruvate: step 1/1. Catalyzes the acyloin condensation reaction between C atoms 2 and 3 of pyruvate and glyceraldehyde 3-phosphate to yield 1-deoxy-D-xylulose-5-phosphate (DXP). This is 1-deoxy-D-xylulose-5-phosphate synthase 2 from Roseobacter denitrificans (strain ATCC 33942 / OCh 114) (Erythrobacter sp. (strain OCh 114)).